Consider the following 705-residue polypeptide: Ribosomal RNA large subunit methyltransferase K/L (705 aa).

Residues 43–154 (VVYRCCLWSR…GEKGILGFDL (112 aa)) form the THUMP domain.

The protein belongs to the methyltransferase superfamily. RlmKL family.

It is found in the cytoplasm. It catalyses the reaction guanosine(2445) in 23S rRNA + S-adenosyl-L-methionine = N(2)-methylguanosine(2445) in 23S rRNA + S-adenosyl-L-homocysteine + H(+). The enzyme catalyses guanosine(2069) in 23S rRNA + S-adenosyl-L-methionine = N(2)-methylguanosine(2069) in 23S rRNA + S-adenosyl-L-homocysteine + H(+). Its function is as follows. Specifically methylates the guanine in position 2445 (m2G2445) and the guanine in position 2069 (m7G2069) of 23S rRNA. This Aliivibrio salmonicida (strain LFI1238) (Vibrio salmonicida (strain LFI1238)) protein is Ribosomal RNA large subunit methyltransferase K/L.